The following is a 62-amino-acid chain: uncharacterized protein (62 aa).

The helical transmembrane segment at 15 to 37 (FSSGVLISNFLLFNFIIISHSSL) threads the bilayer. Positions 41–56 (TTTTTTTTTTTTNTKS) are enriched in low complexity. Residues 41–62 (TTTTTTTTTTTTNTKSTLHRSG) form a disordered region.

The protein localises to the membrane. This is an uncharacterized protein from Dictyostelium discoideum (Social amoeba).